Here is a 390-residue protein sequence, read N- to C-terminus: Transforming growth factor beta-1 proprotein (390 aa).

The first 29 residues, 1 to 29 (MPPSGLRLLPLLLPLLWLLMLTPGRPVAG), serve as a signal peptide directing secretion. The straightjacket domain stretch occupies residues 30–74 (LSTCKTIDMELVKRKGIEAIRGQILSKLRLASPPSQGDVPPGPLP). The tract at residues 75–271 (EAILALYNST…ATPLERAQHL (197 aa)) is arm domain. Asn-82, Asn-136, and Asn-176 each carry an N-linked (GlcNAc...) asparagine glycan. The bowtie tail stretch occupies residues 226–252 (DSKDNTLQVDINGFSSGRRGDLATIHG). The Cell attachment site motif lies at 244–246 (RGD). Disulfide bonds link Cys-285/Cys-294, Cys-293/Cys-356, Cys-322/Cys-387, and Cys-326/Cys-389.

It belongs to the TGF-beta family. As to quaternary structure, homodimer; disulfide-linked. Interacts with the serine proteases, HTRA1 and HTRA3: the interaction with either inhibits TGFB1-mediated signaling and the HTRA protease activity is required for this inhibition. May interact with THSD4; this interaction may lead to sequestration by FBN1 microfibril assembly and attenuation of TGFB signaling. Interacts with CD109, DPT and ASPN. Interacts with EFEMP2. Interacts with TSKU; the interaction contributes to regulation of the hair cycle. Interacts with TGFBR3. Homodimer; disulfide-linked. Interacts with transforming growth factor beta-1 (TGF-beta-1) chain; interaction is non-covalent and maintains TGF-beta-1 in a latent state; each latency-associated peptide (LAP) monomer interacts with TGF-beta-1 in the other monomer. Interacts with LTBP1; leading to regulation of TGF-beta-1 activation. Interacts with LRRC32/GARP; leading to regulation of TGF-beta-1 activation on the surface of activated regulatory T-cells (Tregs). Interacts with LRRC33/NRROS; leading to regulation of TGF-beta-1 activation in macrophages and microglia. Interacts (via cell attachment site) with integrins ITGAV and ITGB6 (ITGAV:ITGB6), leading to release of the active TGF-beta-1. Interacts with NREP; the interaction results in a decrease in TGFB1 autoinduction. Interacts with HSP90AB1; inhibits latent TGFB1 activation. In terms of assembly, homodimer; disulfide-linked. Interacts with TGF-beta receptors (TGFBR1 and TGFBR2), leading to signal transduction. Transforming growth factor beta-1 proprotein: The precursor proprotein is cleaved in the Golgi apparatus by FURIN to form Transforming growth factor beta-1 (TGF-beta-1) and Latency-associated peptide (LAP) chains, which remain non-covalently linked, rendering TGF-beta-1 inactive. In terms of processing, N-glycosylated. Deglycosylation leads to activation of Transforming growth factor beta-1 (TGF-beta-1); mechanisms triggering deglycosylation-driven activation of TGF-beta-1 are however unclear.

The protein localises to the secreted. The protein resides in the extracellular space. It is found in the extracellular matrix. Transforming growth factor beta-1 proprotein: Precursor of the Latency-associated peptide (LAP) and Transforming growth factor beta-1 (TGF-beta-1) chains, which constitute the regulatory and active subunit of TGF-beta-1, respectively. In terms of biological role, required to maintain the Transforming growth factor beta-1 (TGF-beta-1) chain in a latent state during storage in extracellular matrix. Associates non-covalently with TGF-beta-1 and regulates its activation via interaction with 'milieu molecules', such as LTBP1, LRRC32/GARP and LRRC33/NRROS, that control activation of TGF-beta-1. Interaction with LRRC33/NRROS regulates activation of TGF-beta-1 in macrophages and microglia. Interaction with LRRC32/GARP controls activation of TGF-beta-1 on the surface of activated regulatory T-cells (Tregs). Interaction with integrins (ITGAV:ITGB6 or ITGAV:ITGB8) results in distortion of the Latency-associated peptide chain and subsequent release of the active TGF-beta-1. Functionally, multifunctional protein that regulates the growth and differentiation of various cell types and is involved in various processes, such as normal development, immune function, microglia function and responses to neurodegeneration. Activation into mature form follows different steps: following cleavage of the proprotein in the Golgi apparatus, Latency-associated peptide (LAP) and Transforming growth factor beta-1 (TGF-beta-1) chains remain non-covalently linked rendering TGF-beta-1 inactive during storage in extracellular matrix. At the same time, LAP chain interacts with 'milieu molecules', such as LTBP1, LRRC32/GARP and LRRC33/NRROS that control activation of TGF-beta-1 and maintain it in a latent state during storage in extracellular milieus. TGF-beta-1 is released from LAP by integrins (ITGAV:ITGB6 or ITGAV:ITGB8): integrin-binding to LAP stabilizes an alternative conformation of the LAP bowtie tail and results in distortion of the LAP chain and subsequent release of the active TGF-beta-1. Once activated following release of LAP, TGF-beta-1 acts by binding to TGF-beta receptors (TGFBR1 and TGFBR2), which transduce signal. While expressed by many cells types, TGF-beta-1 only has a very localized range of action within cell environment thanks to fine regulation of its activation by Latency-associated peptide chain (LAP) and 'milieu molecules'. Plays an important role in bone remodeling: acts as a potent stimulator of osteoblastic bone formation, causing chemotaxis, proliferation and differentiation in committed osteoblasts. Can promote either T-helper 17 cells (Th17) or regulatory T-cells (Treg) lineage differentiation in a concentration-dependent manner. At high concentrations, leads to FOXP3-mediated suppression of RORC and down-regulation of IL-17 expression, favoring Treg cell development. At low concentrations in concert with IL-6 and IL-21, leads to expression of the IL-17 and IL-23 receptors, favoring differentiation to Th17 cells. Stimulates sustained production of collagen through the activation of CREB3L1 by regulated intramembrane proteolysis (RIP). Mediates SMAD2/3 activation by inducing its phosphorylation and subsequent translocation to the nucleus. Positively regulates odontoblastic differentiation in dental papilla cells, via promotion of IPO7-mediated translocation of phosphorylated SMAD2 to the nucleus and subsequent transcription of target genes. Can induce epithelial-to-mesenchymal transition (EMT) and cell migration in various cell types. In Ovis aries (Sheep), this protein is Transforming growth factor beta-1 proprotein (TGFB1).